Here is a 268-residue protein sequence, read N- to C-terminus: 18S rRNA (guanine-N(7))-methyltransferase bud23 (268 aa).

A disordered region spans residues Arg-246 to Phe-268.

It belongs to the class I-like SAM-binding methyltransferase superfamily. BUD23/WBSCR22 family.

It is found in the cytoplasm. The protein resides in the nucleus. It carries out the reaction a guanosine in 18S rRNA + S-adenosyl-L-methionine = an N(7)-methylguanosine in 18S rRNA + S-adenosyl-L-homocysteine. Its function is as follows. S-adenosyl-L-methionine-dependent methyltransferase that specifically methylates the N(7) position of a guanine in 18S rRNA. Important for biogenesis end export of the 40S ribosomal subunit independent on its methyltransferase activity. This is 18S rRNA (guanine-N(7))-methyltransferase bud23 (bud23) from Schizosaccharomyces pombe (strain 972 / ATCC 24843) (Fission yeast).